The chain runs to 523 residues: Ribonuclease Y (523 aa).

Residues 3-23 (VWYAIGSIIFGLLVGVSVYLI) form a helical membrane-spanning segment. A KH domain is found at 213 to 279 (LVNVINLPND…TKTIEKLVED (67 aa)). One can recognise an HD domain in the interval 339 to 432 (ALGHSIEVAN…VCAADTLSAA (94 aa)).

The protein belongs to the RNase Y family.

It localises to the cell membrane. In terms of biological role, endoribonuclease that initiates mRNA decay. In Helicobacter hepaticus (strain ATCC 51449 / 3B1), this protein is Ribonuclease Y.